The following is a 193-amino-acid chain: Probable GTP-binding protein EngB (193 aa).

Residues 22–193 (ALPEFALAGR…EAWAALERFL (172 aa)) enclose the EngB-type G domain. GTP contacts are provided by residues 30–37 (GRSNVGKS), 57–61 (GKTQT), 75–78 (DVPG), 142–145 (TKAD), and 174–176 (FSA). Mg(2+) is bound by residues Ser37 and Thr59.

It belongs to the TRAFAC class TrmE-Era-EngA-EngB-Septin-like GTPase superfamily. EngB GTPase family. Requires Mg(2+) as cofactor.

Functionally, necessary for normal cell division and for the maintenance of normal septation. The protein is Probable GTP-binding protein EngB of Geobacillus sp. (strain WCH70).